A 231-amino-acid polypeptide reads, in one-letter code: 5'-methylthioadenosine/S-adenosylhomocysteine nucleosidase (231 aa).

Catalysis depends on Glu-12, which acts as the Proton acceptor. Substrate contacts are provided by residues Gly-78, Val-153, and Met-174 to Glu-175. The active-site Proton donor is Asp-198.

It belongs to the PNP/UDP phosphorylase family. MtnN subfamily.

The catalysed reaction is S-adenosyl-L-homocysteine + H2O = S-(5-deoxy-D-ribos-5-yl)-L-homocysteine + adenine. It catalyses the reaction S-methyl-5'-thioadenosine + H2O = 5-(methylsulfanyl)-D-ribose + adenine. It carries out the reaction 5'-deoxyadenosine + H2O = 5-deoxy-D-ribose + adenine. Its pathway is amino-acid biosynthesis; L-methionine biosynthesis via salvage pathway; S-methyl-5-thio-alpha-D-ribose 1-phosphate from S-methyl-5'-thioadenosine (hydrolase route): step 1/2. Functionally, catalyzes the irreversible cleavage of the glycosidic bond in both 5'-methylthioadenosine (MTA) and S-adenosylhomocysteine (SAH/AdoHcy) to adenine and the corresponding thioribose, 5'-methylthioribose and S-ribosylhomocysteine, respectively. Also cleaves 5'-deoxyadenosine, a toxic by-product of radical S-adenosylmethionine (SAM) enzymes, into 5-deoxyribose and adenine. This is 5'-methylthioadenosine/S-adenosylhomocysteine nucleosidase from Aliivibrio fischeri (strain MJ11) (Vibrio fischeri).